We begin with the raw amino-acid sequence, 346 residues long: Beta-ketoacyl-[acyl-carrier-protein] synthase III (346 aa).

Active-site residues include C120 and H256. An ACP-binding region spans residues 257–261 (QANIR). Residue N286 is part of the active site.

The protein belongs to the thiolase-like superfamily. FabH family. Homodimer.

The protein resides in the cytoplasm. The enzyme catalyses malonyl-[ACP] + acetyl-CoA + H(+) = 3-oxobutanoyl-[ACP] + CO2 + CoA. The protein operates within lipid metabolism; fatty acid biosynthesis. Its function is as follows. Catalyzes the condensation reaction of fatty acid synthesis by the addition to an acyl acceptor of two carbons from malonyl-ACP. Catalyzes the first condensation reaction which initiates fatty acid synthesis and may therefore play a role in governing the total rate of fatty acid production. Possesses both acetoacetyl-ACP synthase and acetyl transacylase activities. Its substrate specificity determines the biosynthesis of branched-chain and/or straight-chain of fatty acids. The polypeptide is Beta-ketoacyl-[acyl-carrier-protein] synthase III (Deinococcus geothermalis (strain DSM 11300 / CIP 105573 / AG-3a)).